We begin with the raw amino-acid sequence, 288 residues long: Homoserine kinase (288 aa).

Residue 79–89 (PLARGLGSSSS) participates in ATP binding.

It belongs to the GHMP kinase family. Homoserine kinase subfamily.

It is found in the cytoplasm. It catalyses the reaction L-homoserine + ATP = O-phospho-L-homoserine + ADP + H(+). Its pathway is amino-acid biosynthesis; L-threonine biosynthesis; L-threonine from L-aspartate: step 4/5. Catalyzes the ATP-dependent phosphorylation of L-homoserine to L-homoserine phosphate. The polypeptide is Homoserine kinase (Streptococcus sanguinis (strain SK36)).